Reading from the N-terminus, the 339-residue chain is Large ribosomal subunit protein uL10 (339 aa).

Positions 300–339 (AAAQATPSVEEREEEEKPEEEEEEEEKEEEAIEGLGALFG) are disordered. Over residues 310 to 331 (EREEEEKPEEEEEEEEKEEEAI) the composition is skewed to acidic residues.

This sequence belongs to the universal ribosomal protein uL10 family. In terms of assembly, part of the 50S ribosomal subunit. Forms part of the ribosomal stalk which helps the ribosome interact with GTP-bound translation factors. Forms a heptameric L10(L12)2(L12)2(L12)2 complex, where L10 forms an elongated spine to which the L12 dimers bind in a sequential fashion.

In terms of biological role, forms part of the ribosomal stalk, playing a central role in the interaction of the ribosome with GTP-bound translation factors. In Archaeoglobus fulgidus (strain ATCC 49558 / DSM 4304 / JCM 9628 / NBRC 100126 / VC-16), this protein is Large ribosomal subunit protein uL10.